The primary structure comprises 69 residues: uncharacterized protein (69 aa).

The interval 21–42 (MYAANKKSDARRRGKVGKEQWE) is disordered. Residues 35–69 (KVGKEQWEKEMEQYNIQKAQFEKELKEKKEKELKK) are a coiled coil.

This is an uncharacterized protein from Acheta domesticus (House cricket).